Consider the following 789-residue polypeptide: Phenylalanine--tRNA ligase beta subunit (789 aa).

The tRNA-binding domain maps to 39–149; sequence ADGLEAFRIA…HEAPVGQSYV (111 aa). A B5 domain is found at 399–471; that stretch reads SAVPVISYDP…RIEGLDNVPS (73 aa). Asp-449, Asp-455, and Asp-459 together coordinate Mg(2+). The 93-residue stretch at 696 to 788 folds into the FDX-ACB domain; it reads SMLQPVFRDF…AAAKKGARLR (93 aa).

It belongs to the phenylalanyl-tRNA synthetase beta subunit family. Type 1 subfamily. Tetramer of two alpha and two beta subunits. Mg(2+) is required as a cofactor.

The protein resides in the cytoplasm. It catalyses the reaction tRNA(Phe) + L-phenylalanine + ATP = L-phenylalanyl-tRNA(Phe) + AMP + diphosphate + H(+). This chain is Phenylalanine--tRNA ligase beta subunit, found in Zymomonas mobilis subsp. mobilis (strain ATCC 31821 / ZM4 / CP4).